We begin with the raw amino-acid sequence, 161 residues long: MSTESAMFLAPIPTTDAVPPVIERLVEQHQAAWVDQDSIDDWLAGGGDCVLFIAGDPVRFPECVDVAVVLPELQRVFFNGFRIGVAKREREHEDVLANRFGTQRRPSLVFLRDGAYVSVIAGMRDWDEYVREVRRALAMPTSRPPSIGIPVISAAAGGSCH.

It belongs to the HupG/HyaE family.

The chain is Hydrogenase expression/formation protein HoxO (hoxO) from Cupriavidus necator (strain ATCC 17699 / DSM 428 / KCTC 22496 / NCIMB 10442 / H16 / Stanier 337) (Ralstonia eutropha).